We begin with the raw amino-acid sequence, 263 residues long: Coiled-coil domain-containing protein 172 (263 aa).

A coiled-coil region spans residues threonine 13–glutamate 191.

It belongs to the CCDC172 family. As to quaternary structure, may interact with TEKT2. In terms of tissue distribution, detected in spermatozoa (at protein level). Predominantly expressed in testis and in spermatozoa from the caput and corpus epididymis.

The protein localises to the cytoplasm. Its subcellular location is the cell projection. The protein resides in the cilium. This is Coiled-coil domain-containing protein 172 (Ccdc172) from Rattus norvegicus (Rat).